The sequence spans 266 residues: Trypsin 5G1 (266 aa).

Positions 1-18 (MTRIILILTATFFACALG) are cleaved as a signal peptide. The propeptide at 19–39 (ASTGGSHPLRPWWNALRSSGR) is activation peptide. The Peptidase S1 domain occupies 40 to 265 (IVGGFEVPVE…VRDWVKEVSG (226 aa)). A disulfide bridge connects residues Cys66 and Cys82. Residues His81 and Asp125 each act as charge relay system in the active site. Cystine bridges form between Cys190-Cys206 and Cys217-Cys241. Residue Ser221 is the Charge relay system of the active site.

Belongs to the peptidase S1 family. In terms of tissue distribution, midgut.

It localises to the secreted. The protein localises to the extracellular space. The catalysed reaction is Preferential cleavage: Arg-|-Xaa, Lys-|-Xaa.. Functionally, major function may be to aid in digestion of the blood meal. The polypeptide is Trypsin 5G1 (Aedes aegypti (Yellowfever mosquito)).